A 166-amino-acid polypeptide reads, in one-letter code: NADH-ubiquinone oxidoreductase chain 6 (166 aa).

The next 5 helical transmembrane spans lie at 1–21 (MMYF…AFAS), 26–46 (IYGG…IVSL), 47–67 (GGSF…LVVF), 86–106 (TVVL…YEFF), and 139–159 (CGGW…FVVL).

It belongs to the complex I subunit 6 family. As to quaternary structure, core subunit of respiratory chain NADH dehydrogenase (Complex I) which is composed of 45 different subunits.

Its subcellular location is the mitochondrion inner membrane. The enzyme catalyses a ubiquinone + NADH + 5 H(+)(in) = a ubiquinol + NAD(+) + 4 H(+)(out). Core subunit of the mitochondrial membrane respiratory chain NADH dehydrogenase (Complex I) which catalyzes electron transfer from NADH through the respiratory chain, using ubiquinone as an electron acceptor. Essential for the catalytic activity and assembly of complex I. The polypeptide is NADH-ubiquinone oxidoreductase chain 6 (MT-ND6) (Tachyglossus aculeatus aculeatus (Southeast Australian short-beaked echidna)).